Here is a 263-residue protein sequence, read N- to C-terminus: Proliferating cell nuclear antigen (263 aa).

The DNA-binding element occupies 61-80 (RCDRNLSMGMNLNNMAKMLR).

This sequence belongs to the PCNA family. In terms of assembly, homotrimer. Interacts with FEN1A. Interacts with POLL. Interacts with RAD/GEN1. Interacts with DJA7 and DJA8. As to expression, expressed in proliferating tissues. Expressed in roots and root apex. Expressed at low levels in young leaves. Not detected in mature leaves. Highly expressed in shoot apical meristem (SAM). Expressed in flag leaves and panicles.

It is found in the nucleus. In terms of biological role, this protein is an auxiliary protein of DNA polymerase delta and is involved in the control of eukaryotic DNA replication by increasing the polymerase's processibility during elongation of the leading strand. This chain is Proliferating cell nuclear antigen, found in Oryza sativa subsp. japonica (Rice).